The following is a 353-amino-acid chain: Chorismate synthase (353 aa).

2 residues coordinate NADP(+): R48 and R54. Residues 125 to 127 (RSS), 238 to 239 (NA), G278, 293 to 297 (KPTSS), and R319 each bind FMN.

It belongs to the chorismate synthase family. In terms of assembly, homotetramer. FMNH2 serves as cofactor.

The catalysed reaction is 5-O-(1-carboxyvinyl)-3-phosphoshikimate = chorismate + phosphate. Its pathway is metabolic intermediate biosynthesis; chorismate biosynthesis; chorismate from D-erythrose 4-phosphate and phosphoenolpyruvate: step 7/7. Catalyzes the anti-1,4-elimination of the C-3 phosphate and the C-6 proR hydrogen from 5-enolpyruvylshikimate-3-phosphate (EPSP) to yield chorismate, which is the branch point compound that serves as the starting substrate for the three terminal pathways of aromatic amino acid biosynthesis. This reaction introduces a second double bond into the aromatic ring system. This chain is Chorismate synthase, found in Bordetella parapertussis (strain 12822 / ATCC BAA-587 / NCTC 13253).